Reading from the N-terminus, the 312-residue chain is Serpentine receptor class gamma-31 (312 aa).

7 helical membrane-spanning segments follow: residues 6-26 (LITQFIYGTISTIIYSLTVVF), 38-58 (FLKLYICQFFFNMWMYWNFYI), 92-112 (FIFCQYHLGFMSYSNLFLTSI), 132-152 (TYILIALIFITPILFTYPLLV), 180-200 (FILVWMVVTVLLSIIANIICW), 218-238 (LFLVSFVTFVINCGVFSIAML), and 259-279 (LLSPFANDLLSLSTPYVLIIF).

The protein belongs to the nematode receptor-like protein srg family.

The protein localises to the membrane. The protein is Serpentine receptor class gamma-31 (srg-31) of Caenorhabditis elegans.